The chain runs to 193 residues: Superoxide dismutase [Fe] (193 aa).

The Fe cation site is built by His27, His74, Asp157, and His161.

Belongs to the iron/manganese superoxide dismutase family. Homodimer. Fe cation serves as cofactor.

The enzyme catalyses 2 superoxide + 2 H(+) = H2O2 + O2. Its function is as follows. Destroys superoxide anion radicals which are normally produced within the cells and which are toxic to biological systems. Partially complements double sodA-sodB deletions in E.coli. The polypeptide is Superoxide dismutase [Fe] (Pseudomonas aeruginosa (strain ATCC 15692 / DSM 22644 / CIP 104116 / JCM 14847 / LMG 12228 / 1C / PRS 101 / PAO1)).